A 58-amino-acid polypeptide reads, in one-letter code: Small ribosomal subunit protein bS21 (58 aa).

It belongs to the bacterial ribosomal protein bS21 family.

The sequence is that of Small ribosomal subunit protein bS21 from Prochlorococcus marinus (strain MIT 9515).